Reading from the N-terminus, the 425-residue chain is MSKIVVAGGTPLYGDVRISGAKNAVLPILCATLLADAPVEISNVPYLHDVITMINLLRELGAGVTMNEGIEAKGRSITVDPRWVRQRVVPYDLVKTMRASVLLLGPLLACYGAAEVALPGGCAIGSRPVDQHIRGLQSLGAEITVENGYIKASVSQGRLKGGRFVFDVVSVTGTENLLMAAAVAQGTSVIENAAMEPEVVDLAECLITLGARVEGAGTPRIVVEGVERLKSGQYAVLPDRIETGTFLVATAMTGGRISMQQVRPQTLDAVLGKLTEAGACIEIGADSIRLDMQGRRPCSVNLTTAPYPGFPTDMQAQFMALNCVAEGVGVIKETIFENRFMHVDELLRLGAKIQIEGHTAIVQGVERLSGAPVMATDLRASASLILAGLVAEGETIIDRIYHLDRGYENIEKKLGVLGASIRRMT.

Residue lysine 22 to asparagine 23 coordinates phosphoenolpyruvate. Arginine 98 contributes to the UDP-N-acetyl-alpha-D-glucosamine binding site. The Proton donor role is filled by cysteine 122. Cysteine 122 carries the post-translational modification 2-(S-cysteinyl)pyruvic acid O-phosphothioketal. UDP-N-acetyl-alpha-D-glucosamine contacts are provided by residues arginine 127 to glutamine 131, aspartate 313, and isoleucine 335.

This sequence belongs to the EPSP synthase family. MurA subfamily.

The protein resides in the cytoplasm. It catalyses the reaction phosphoenolpyruvate + UDP-N-acetyl-alpha-D-glucosamine = UDP-N-acetyl-3-O-(1-carboxyvinyl)-alpha-D-glucosamine + phosphate. Its pathway is cell wall biogenesis; peptidoglycan biosynthesis. Cell wall formation. Adds enolpyruvyl to UDP-N-acetylglucosamine. This chain is UDP-N-acetylglucosamine 1-carboxyvinyltransferase, found in Xylella fastidiosa (strain M12).